Here is a 62-residue protein sequence, read N- to C-terminus: Small ribosomal subunit protein eS17 (62 aa).

This sequence belongs to the eukaryotic ribosomal protein eS17 family.

The polypeptide is Small ribosomal subunit protein eS17 (Methanocaldococcus jannaschii (strain ATCC 43067 / DSM 2661 / JAL-1 / JCM 10045 / NBRC 100440) (Methanococcus jannaschii)).